The primary structure comprises 123 residues: Large ribosomal subunit protein bL12 (123 aa).

Belongs to the bacterial ribosomal protein bL12 family. Homodimer. Part of the ribosomal stalk of the 50S ribosomal subunit. Forms a multimeric L10(L12)X complex, where L10 forms an elongated spine to which 2 to 4 L12 dimers bind in a sequential fashion. Binds GTP-bound translation factors.

Forms part of the ribosomal stalk which helps the ribosome interact with GTP-bound translation factors. Is thus essential for accurate translation. The sequence is that of Large ribosomal subunit protein bL12 from Rhodopseudomonas palustris (strain BisA53).